The following is a 673-amino-acid chain: MSKSFVLHSAFRPSGDQPEAIRRLEEGLEDGLAHQTLLGVTGSGKTFTIANVIADLQRPTMVLAPNKTLAAQLYGEMKEFFPENAVEYFVSYYDYYQPEAYVPSSDTFIEKDASVNEHIEQMRLSATKALLERRDVVVVASVSAIYGLGDPDLYLKMMLHLTVGMLIDQRAILRRLAELQYTRNDQAFQRGTFRVRGEVIDVFPAESDDIALRIELFDEEVERLSLFDPLTGHVEGTVPRYTIYPKTHYVTPRERIVQAMEEIKLELAERRKVLLANNKLLEEQRLTQRTQFDLEMMNELGYCSGIENYSRFLSGRGPGEPPPTLFDYLPADGLLVIDESHVTVPQIGGMYRGDRARKETLVEYGFRLPSALDNRPMKFEEFEALAPQTIYVSATPGAYELDKSGGEVVDQVVRPTGLLDPIIEVRPVATQVDDLLSEIRLRTAINERVLVTTLTKRMAEDLTEYLEEHGERVRYLHSDIDTVERMEIIRDLRLGEFDVLVGINLLREGLDMPEVSLVAILDADKEGFLRSERSLIQTIGRAARNVNGKAILYGDKITPSMAKAIGETERRREKQQRYNEEHGIVPQGLNKKVVDILQLGQGLAKTKAKGRGKAKAVEPAGLSAVDMTPKALQQKIHELEGQMMQHAQNLEFEEAAQIRDQLHQLRELFIAAS.

One can recognise a Helicase ATP-binding domain in the interval 26–183; sequence EGLEDGLAHQ…RRLAELQYTR (158 aa). Position 39 to 46 (39 to 46) interacts with ATP; sequence GVTGSGKT. The Beta-hairpin motif lies at 92 to 115; it reads YYDYYQPEAYVPSSDTFIEKDASV. The 167-residue stretch at 431 to 597 folds into the Helicase C-terminal domain; sequence QVDDLLSEIR…GLNKKVVDIL (167 aa). In terms of domain architecture, UVR spans 633–668; the sequence is QQKIHELEGQMMQHAQNLEFEEAAQIRDQLHQLREL.

Belongs to the UvrB family. As to quaternary structure, forms a heterotetramer with UvrA during the search for lesions. Interacts with UvrC in an incision complex.

The protein localises to the cytoplasm. Its function is as follows. The UvrABC repair system catalyzes the recognition and processing of DNA lesions. A damage recognition complex composed of 2 UvrA and 2 UvrB subunits scans DNA for abnormalities. Upon binding of the UvrA(2)B(2) complex to a putative damaged site, the DNA wraps around one UvrB monomer. DNA wrap is dependent on ATP binding by UvrB and probably causes local melting of the DNA helix, facilitating insertion of UvrB beta-hairpin between the DNA strands. Then UvrB probes one DNA strand for the presence of a lesion. If a lesion is found the UvrA subunits dissociate and the UvrB-DNA preincision complex is formed. This complex is subsequently bound by UvrC and the second UvrB is released. If no lesion is found, the DNA wraps around the other UvrB subunit that will check the other stand for damage. The polypeptide is UvrABC system protein B (Klebsiella pneumoniae subsp. pneumoniae (strain ATCC 700721 / MGH 78578)).